The chain runs to 264 residues: 3-methyl-2-oxobutanoate hydroxymethyltransferase 1 (264 aa).

Mg(2+)-binding residues include D45 and D84. 3-methyl-2-oxobutanoate-binding positions include 45–46 (DS), D84, and K112. Mg(2+) is bound at residue E114. E181 functions as the Proton acceptor in the catalytic mechanism.

This sequence belongs to the PanB family. Homodecamer; pentamer of dimers. Mg(2+) serves as cofactor.

It localises to the cytoplasm. It catalyses the reaction 3-methyl-2-oxobutanoate + (6R)-5,10-methylene-5,6,7,8-tetrahydrofolate + H2O = 2-dehydropantoate + (6S)-5,6,7,8-tetrahydrofolate. It functions in the pathway cofactor biosynthesis; (R)-pantothenate biosynthesis; (R)-pantoate from 3-methyl-2-oxobutanoate: step 1/2. Catalyzes the reversible reaction in which hydroxymethyl group from 5,10-methylenetetrahydrofolate is transferred onto alpha-ketoisovalerate to form ketopantoate. This chain is 3-methyl-2-oxobutanoate hydroxymethyltransferase 1, found in Aliivibrio fischeri (strain ATCC 700601 / ES114) (Vibrio fischeri).